We begin with the raw amino-acid sequence, 437 residues long: U1 small nuclear ribonucleoprotein 70 kDa (437 aa).

Thr2 is modified (N-acetylthreonine). The tract at residues 48–79 (FEDPRDAPPPTRAETREERMERKRREKIERRQ) is disordered. Residues 60–79 (AETREERMERKRREKIERRQ) show a composition bias toward basic and acidic residues. The interval 92 to 202 (HNDPNAQGDA…GGGLGGTRRG (111 aa)) is required for interaction with U1 RNA. The RRM domain maps to 103 to 181 (KTLFVARVNY…RRVLVDVERG (79 aa)). Position 118 is an N6-acetyllysine (Lys118). Tyr126 carries the phosphotyrosine modification. Residues 187 to 437 (WRPRRLGGGL…NGYLMEAAPE (251 aa)) form a disordered region. Residues 192 to 201 (LGGGLGGTRR) are compositionally biased toward gly residues. Residues 207-254 (NIRHSGRDDTSRYDERPGPSPLPHRDRDRDRERERRERSRERDKERER) show a composition bias toward basic and acidic residues. 2 positions are modified to phosphoserine: Ser226 and Ser268. Basic residues predominate over residues 255 to 268 (RRSRSRDRRRRSRS). Composition is skewed to basic and acidic residues over residues 269-286 (RDKEERRRSRERSKDKDR) and 294-310 (RSRERARRERERKEELR). Ser320 carries the phosphoserine modification. Basic and acidic residues predominate over residues 343-393 (PEEKGRDRDRERRRSHRSERERRRDRDRDRDRDREHKRGERGSERGRDEAR). Residue Lys346 forms a Glycyl lysine isopeptide (Lys-Gly) (interchain with G-Cter in SUMO2) linkage. Ser410 bears the Phosphoserine mark.

Component of the U1 snRNP. The U1 snRNP is composed of the U1 snRNA and the 7 core Sm proteins SNRPB, SNRPD1, SNRPD2, SNRPD3, SNRPE, SNRPF and SNRPG that assemble in a heptameric protein ring on the Sm site of the small nuclear RNA to form the core snRNP, and at least three U1 snRNP-specific proteins SNRNP70/U1-70K, SNRPA/U1-A and SNRPC/U1-C. Interacts with SCNM1. Found in a pre-mRNA splicing complex with SFRS4, SFRS5, SNRNP70, SNRPA1, SRRM1 and SRRM2. Found in a pre-mRNA exonic splicing enhancer (ESE) complex with SNRNP70, SNRPA1, SRRM1 and TRA2B/SFRS10. Interacts with dephosphorylated SFRS13A and SFPQ. Interacts with NUDT21/CPSF5, CPSF6, SCAF11, and ZRANB2. Interacts with GEMIN5. Interacts with FUS. Post-translationally, the N-terminus is blocked. Extensively phosphorylated on serine residues in the C-terminal region.

It is found in the nucleus speckle. It localises to the nucleus. Its subcellular location is the nucleoplasm. In terms of biological role, component of the spliceosomal U1 snRNP, which is essential for recognition of the pre-mRNA 5' splice-site and the subsequent assembly of the spliceosome. SNRNP70 binds to the loop I region of U1-snRNA. Its function is as follows. Truncated isoforms that lack the RRM domain cannot bind U1-snRNA. This Homo sapiens (Human) protein is U1 small nuclear ribonucleoprotein 70 kDa (SNRNP70).